The following is a 398-amino-acid chain: Dual-specificity RNA methyltransferase RlmN (398 aa).

Glutamate 119 acts as the Proton acceptor in catalysis. The Radical SAM core domain occupies 125-364 (EADRATLCVS…TIVRKTRGDD (240 aa)). Cysteine 132 and cysteine 369 are disulfide-bonded. Positions 139, 143, and 146 each coordinate [4Fe-4S] cluster. Residues 193 to 194 (GE), serine 225, 247 to 249 (SLH), and asparagine 326 each bind S-adenosyl-L-methionine. Cysteine 369 serves as the catalytic S-methylcysteine intermediate.

It belongs to the radical SAM superfamily. RlmN family. It depends on [4Fe-4S] cluster as a cofactor.

The protein resides in the cytoplasm. It catalyses the reaction adenosine(2503) in 23S rRNA + 2 reduced [2Fe-2S]-[ferredoxin] + 2 S-adenosyl-L-methionine = 2-methyladenosine(2503) in 23S rRNA + 5'-deoxyadenosine + L-methionine + 2 oxidized [2Fe-2S]-[ferredoxin] + S-adenosyl-L-homocysteine. It carries out the reaction adenosine(37) in tRNA + 2 reduced [2Fe-2S]-[ferredoxin] + 2 S-adenosyl-L-methionine = 2-methyladenosine(37) in tRNA + 5'-deoxyadenosine + L-methionine + 2 oxidized [2Fe-2S]-[ferredoxin] + S-adenosyl-L-homocysteine. Specifically methylates position 2 of adenine 2503 in 23S rRNA and position 2 of adenine 37 in tRNAs. m2A2503 modification seems to play a crucial role in the proofreading step occurring at the peptidyl transferase center and thus would serve to optimize ribosomal fidelity. This chain is Dual-specificity RNA methyltransferase RlmN, found in Yersinia pseudotuberculosis serotype IB (strain PB1/+).